The chain runs to 207 residues: Uracil phosphoribosyltransferase (207 aa).

Residues Arg77, Arg102, and Asp129 to Ser137 contribute to the 5-phospho-alpha-D-ribose 1-diphosphate site. Uracil contacts are provided by residues Ile192 and Gly197–Ala199. Asp198 contacts 5-phospho-alpha-D-ribose 1-diphosphate.

The protein belongs to the UPRTase family. Requires Mg(2+) as cofactor.

It catalyses the reaction UMP + diphosphate = 5-phospho-alpha-D-ribose 1-diphosphate + uracil. It functions in the pathway pyrimidine metabolism; UMP biosynthesis via salvage pathway; UMP from uracil: step 1/1. With respect to regulation, allosterically activated by GTP. Catalyzes the conversion of uracil and 5-phospho-alpha-D-ribose 1-diphosphate (PRPP) to UMP and diphosphate. The protein is Uracil phosphoribosyltransferase of Ureaplasma urealyticum serovar 10 (strain ATCC 33699 / Western).